The chain runs to 263 residues: Small ribosomal subunit protein eS4, Y isoform 1 (263 aa).

Residues 42 to 104 (LPLIIFLRNR…TGEHFRLVYD (63 aa)) enclose the S4 RNA-binding domain.

Belongs to the eukaryotic ribosomal protein eS4 family.

The polypeptide is Small ribosomal subunit protein eS4, Y isoform 1 (RPS4Y1) (Monodelphis domestica (Gray short-tailed opossum)).